The chain runs to 289 residues: Acetyl-coenzyme A carboxylase carboxyl transferase subunit beta (289 aa).

Positions 28-289 (VMTKCPKCKK…QGGEMAVWQS (262 aa)) constitute a CoA carboxyltransferase N-terminal domain. Positions 32, 35, 51, and 54 each coordinate Zn(2+). The segment at 32-54 (CPKCKKIMYTKEVLKNLKVCVNC) adopts a C4-type zinc-finger fold.

This sequence belongs to the AccD/PCCB family. In terms of assembly, acetyl-CoA carboxylase is a heterohexamer composed of biotin carboxyl carrier protein (AccB), biotin carboxylase (AccC) and two subunits each of ACCase subunit alpha (AccA) and ACCase subunit beta (AccD). It depends on Zn(2+) as a cofactor.

It is found in the cytoplasm. It carries out the reaction N(6)-carboxybiotinyl-L-lysyl-[protein] + acetyl-CoA = N(6)-biotinyl-L-lysyl-[protein] + malonyl-CoA. It functions in the pathway lipid metabolism; malonyl-CoA biosynthesis; malonyl-CoA from acetyl-CoA: step 1/1. Its function is as follows. Component of the acetyl coenzyme A carboxylase (ACC) complex. Biotin carboxylase (BC) catalyzes the carboxylation of biotin on its carrier protein (BCCP) and then the CO(2) group is transferred by the transcarboxylase to acetyl-CoA to form malonyl-CoA. The chain is Acetyl-coenzyme A carboxylase carboxyl transferase subunit beta from Bacillus anthracis (strain A0248).